The following is a 432-amino-acid chain: Cytoplasmic 60S subunit biogenesis factor REH1 (432 aa).

The segment at 6–30 (FTCNCCVIQFKTSDLQRYHMKTEWH) adopts a C2H2-type 1 zinc-finger fold. The tract at residues 79–150 (QSNALPQKQK…NTDYGEDTVS (72 aa)) is disordered. A compositionally biased stretch (basic residues) spans 86 to 98 (KQKKPIKSKRGRK). The segment covering 105-117 (KRKDRDIAKEKQN) has biased composition (basic and acidic residues). Polar residues predominate over residues 118–143 (RSVSPSGSISSQLSNLTVGTENTNTD). C2H2-type zinc fingers lie at residues 186–209 (TECI…FSEH) and 237–261 (HNCL…SKRH).

It belongs to the REI1 family. In terms of assembly, associates with nascent pre-60S particles that have not yet entered the translating pool, and is released from mature 60S subunits. Interacts with pre-60S factors NMD3, LSG1, and TIF6.

It localises to the cytoplasm. Functionally, pre-60S-associated cytoplasmic factor involved in the cytoplasmic maturation of the 60S subunit. May act redundantly with REI1 to directly promote a stabilizing structural rearrangement in cytoplasmic 60S subunit maturation independent on the REI1-specific ARX1 recycling. In Saccharomyces cerevisiae (strain ATCC 204508 / S288c) (Baker's yeast), this protein is Cytoplasmic 60S subunit biogenesis factor REH1 (REH1).